The following is a 66-amino-acid chain: Large ribosomal subunit protein bL35 (66 aa).

The span at 1–16 (MPKQKTHRASAKRFKR) shows a compositional bias: basic residues. The disordered stretch occupies residues 1-20 (MPKQKTHRASAKRFKRTGSG).

It belongs to the bacterial ribosomal protein bL35 family.

The polypeptide is Large ribosomal subunit protein bL35 (Streptococcus thermophilus (strain ATCC BAA-250 / LMG 18311)).